A 1295-amino-acid polypeptide reads, in one-letter code: DNA-directed RNA polymerase subunit beta' (1295 aa).

Zn(2+) contacts are provided by Cys66, Cys68, Cys81, and Cys84. Mg(2+) is bound by residues Asp562, Asp564, and Asp566. Residues Cys901, Cys975, Cys982, and Cys985 each coordinate Zn(2+).

Belongs to the RNA polymerase beta' chain family. As to quaternary structure, the RNAP catalytic core consists of 2 alpha, 1 beta, 1 beta' and 1 omega subunit. When a sigma factor is associated with the core the holoenzyme is formed, which can initiate transcription. The cofactor is Mg(2+). Requires Zn(2+) as cofactor.

It catalyses the reaction RNA(n) + a ribonucleoside 5'-triphosphate = RNA(n+1) + diphosphate. Functionally, DNA-dependent RNA polymerase catalyzes the transcription of DNA into RNA using the four ribonucleoside triphosphates as substrates. This chain is DNA-directed RNA polymerase subunit beta', found in Rubrobacter xylanophilus (strain DSM 9941 / JCM 11954 / NBRC 16129 / PRD-1).